The chain runs to 163 residues: Adenosine 5'-monophosphoramidase HINT2 (163 aa).

A mitochondrion-targeting transit peptide spans 1–17 (MAAAVVLAAGLRAARRA). Positions 55-163 (IFSRILDKSL…GGRQLQWPPG (109 aa)) constitute an HIT domain. AMP is bound by residues serine 63 and aspartate 80. Residue lysine 119 is modified to N6-acetyllysine. Asparagine 136 serves as a coordination point for AMP. At lysine 139 the chain carries N6-acetyllysine. AMP-binding positions include 142–145 (AQSV) and 149–151 (HIH). The short motif at 147–151 (HLHIH) is the Histidine triad motif element. Histidine 149 acts as the Tele-AMP-histidine intermediate in catalysis.

Belongs to the HINT family. As to expression, high expression in liver and pancreas. Expression is significantly down-regulated in hepatocellular carcinoma (HCC) patients.

The protein resides in the mitochondrion. It catalyses the reaction adenosine 5'-phosphoramidate + H2O = AMP + NH4(+). Its function is as follows. Exhibits adenosine 5'-monophosphoramidase activity, hydrolyzing purine nucleotide phosphoramidates with a single phosphate group such as adenosine 5'monophosphoramidate (AMP-NH2) to yield AMP and NH2. Hydrolyzes adenosine 5'-O-p-nitrophenylphosphoramidate (AMP-pNA). Hydrolyzes fluorogenic purine nucleoside tryptamine phosphoramidates in vitro. May be involved in steroid biosynthesis. May play a role in apoptosis. This is Adenosine 5'-monophosphoramidase HINT2 from Homo sapiens (Human).